The following is a 611-amino-acid chain: MQRMRGKIFKNEPLVPMNVTSEHEQVQSISKEESRSLSSNDLNLSADSELQLESEPEIESEQLKNHEDVYEIIRSMVLATDTTLPRLSNNSLTGIYNHWKLNPNDDLPLYNPTKYIPYEFHSQYNQDRSYIITPRLSVTKLLVSSWCELRSFYQVYSGSVRLPSTKAMTQGTKLHSKLEAEIHPEIDTTEIEQFLISNAMSLRELQTTVPAEEETVVIDLGEVEQLAVDWAEMLIERLFSLIMGAEAREILLHGYLNLKNRSFVTNKDEIRESSSVLVSGIVDYIKFQNVTNPSDGTLFDDIHGFVDSAFDQVDNVPLVDLSQFLPEAKQILQNYDFRLTFTDVKTRSARQIPRQESVLEAAKFQTFYYRHFFHLLSRDSRFTYFSLIENAERRGHDVDKPLSILTTISLLRKHYHIFFKDFVKLANGEPIGFSPFDDSAKSIPYDFVSMFQSSDEFSLANPNHNHFLEQISAIDGIEYDSILSPLLKVWKTPPTLRYLAARASQLFNVFNENIGDITSVEYRYNKTSELLSEKVYDYNFSEFQAEVESASKFWNGEREVIPTEDLSRCSYCEFQSKCMVAGGKTTEAVEKKTIGPKIRQFLNECESSSKG.

Residues Val-19–Leu-42 are disordered. Residues Ser-21–Arg-35 are compositionally biased toward basic and acidic residues. The [4Fe-4S] cluster site is built by Cys-147, Cys-569, Cys-572, and Cys-578.

The protein belongs to the EXO5 family. As to quaternary structure, monomer. Requires Mg(2+) as cofactor. [4Fe-4S] cluster is required as a cofactor.

It is found in the mitochondrion. Its function is as follows. Single strand DNA specific 5'exonuclease involved in mitochondrial DNA replication and recombination. Releases dinucleotides as main products of catalysis. Has the capacity to slide across 5'double-stranded DNA or 5'RNA sequences and resumes cutting two nucleotides downstream of the double-stranded-to-single-stranded junction or RNA-to-DNA junction, respectively. In Candida albicans (strain WO-1) (Yeast), this protein is Exonuclease V, mitochondrial (EXO5).